A 116-amino-acid polypeptide reads, in one-letter code: Endoribonuclease toxin ChpB (116 aa).

It belongs to the PemK/MazF family. In terms of assembly, homodimer, interacts with ChpS, which inhibits the endoribonuclease activity.

With respect to regulation, stimulated in vitro in a concentration-dependent fashion by extracellular death factor (EDF, a quorum sensing pentapeptide sequence NNWNN, probably produced from the zwf gene product glucose-6-phosphate 1-dehydrogenase), which is able to overcome inhibition by cognate antitoxin ChpS. Toxic component of a type II toxin-antitoxin (TA) system. ChpB is a sequence-specific mRNA and (weak) tmRNA endoribonuclease that inhibits protein synthesis and induces bacterial stasis. Cleavage is independent of the ribosome. Cleavage occurs at ACY sequences where Y is not C. The endoribonuclease activity is not as strong as that of MazF. The endoribonuclease activity (a toxin) is inhibited by its labile cognate antitoxin ChpS. Toxicity results when the levels of ChpS decrease in the cell, leading to mRNA degradation. Both ChpS and ChpB probably bind to the promoter region of the chpS-chpB operon to autoregulate their synthesis. The chain is Endoribonuclease toxin ChpB (chpB) from Escherichia coli (strain K12).